The sequence spans 225 residues: Uracil phosphoribosyltransferase (225 aa).

Position 36–40 (36–40) interacts with GTP; it reads KGLVR. 5-phospho-alpha-D-ribose 1-diphosphate-binding positions include Arg86, Arg111, and 145–153; that span reads DPMLATGST. Residues Ile210 and 215–217 contribute to the uracil site; that span reads GDA. Asp216 provides a ligand contact to 5-phospho-alpha-D-ribose 1-diphosphate.

Belongs to the UPRTase family. It depends on Mg(2+) as a cofactor.

The enzyme catalyses UMP + diphosphate = 5-phospho-alpha-D-ribose 1-diphosphate + uracil. It participates in pyrimidine metabolism; UMP biosynthesis via salvage pathway; UMP from uracil: step 1/1. With respect to regulation, allosterically activated by GTP. Functionally, catalyzes the conversion of uracil and 5-phospho-alpha-D-ribose 1-diphosphate (PRPP) to UMP and diphosphate. The protein is Uracil phosphoribosyltransferase of Haloarcula marismortui (strain ATCC 43049 / DSM 3752 / JCM 8966 / VKM B-1809) (Halobacterium marismortui).